The chain runs to 245 residues: MYTRYSYNPTLGRTYVYDNKYYKNLGHVIKNAKRKKNAAEHELEERNLDPLDKYLVAEDPFLGPGKNQKLTLFKEIRNVKPDTMKLIVNWSGKEFLRETWTRFMEDSFPIVNDQEIMDVFLVVNMRPTKPNRCSVLAQHALRCDSDYVPHEVIRIVKPSYVGSNNEYRISLGKRYNGCPVMNLHSEYTNSFEDFINRVIWENFYKPLVYIGTDSAEEEEILLEVSLVFKIKEFAPDAPLYTGPAY.

The protein belongs to the polyhedrin family.

Functionally, major component of the virus occlusion bodies, which are large proteinaceous structures (polyhedra), that protect the virus from the outside environment for extended periods until they are ingested by insect larvae. This Lepidoptera (butterflies and moths) protein is Polyhedrin.